A 932-amino-acid chain; its full sequence is Protein translocase subunit SecA (932 aa).

ATP is bound by residues Gln87, Gly105–Thr109, and Asp515. The Zn(2+) site is built by Cys916, Cys918, Cys927, and His928.

The protein belongs to the SecA family. In terms of assembly, monomer and homodimer. Part of the essential Sec protein translocation apparatus which comprises SecA, SecYEG and auxiliary proteins SecDF-YajC and YidC. Zn(2+) serves as cofactor.

The protein resides in the cell inner membrane. Its subcellular location is the cytoplasm. The catalysed reaction is ATP + H2O + cellular proteinSide 1 = ADP + phosphate + cellular proteinSide 2.. Its function is as follows. Part of the Sec protein translocase complex. Interacts with the SecYEG preprotein conducting channel. Has a central role in coupling the hydrolysis of ATP to the transfer of proteins into and across the cell membrane, serving both as a receptor for the preprotein-SecB complex and as an ATP-driven molecular motor driving the stepwise translocation of polypeptide chains across the membrane. This chain is Protein translocase subunit SecA, found in Burkholderia orbicola (strain AU 1054).